The chain runs to 91 residues: Acylphosphatase (91 aa).

The Acylphosphatase-like domain maps to 5-91 (RLHAIVEGEV…KGEFTSFDTY (87 aa)). Catalysis depends on residues R20 and N38.

The protein belongs to the acylphosphatase family.

The enzyme catalyses an acyl phosphate + H2O = a carboxylate + phosphate + H(+). This chain is Acylphosphatase (acyP), found in Metallosphaera sedula (strain ATCC 51363 / DSM 5348 / JCM 9185 / NBRC 15509 / TH2).